Here is a 364-residue protein sequence, read N- to C-terminus: 2-oxoadipate dioxygenase/decarboxylase, chloroplastic/amyloplastic (364 aa).

Residues methionine 1–alanine 49 constitute a chloroplast transit peptide. 2-oxoadipate is bound by residues histidine 107 and arginine 111. Histidine 107 serves as a coordination point for Fe(2+). A Fe(2+)-binding site is contributed by histidine 243. Residues glutamine 289 and tyrosine 313 each coordinate 2-oxoadipate. Glutamate 315 provides a ligand contact to Fe(2+).

This sequence belongs to the 2-oxoadipate dioxygenase/decarboxylase family. Fe(2+) is required as a cofactor. Expressed in roots, stems, leaf sheaths, leaf blades, panicles, and endosperm.

The protein resides in the plastid. It is found in the chloroplast. The protein localises to the amyloplast. The enzyme catalyses 2-oxoadipate + O2 = (R)-2-hydroxyglutarate + CO2. It functions in the pathway amino-acid degradation. Its function is as follows. Catalyzes the decarboxylation and hydroxylation of 2-oxoadipate (2OA) to form D-2-hydroxyglutarate (D-2-HGA). Is involved in a D-lysine catabolic pathway. Involved in the regulation of starch synthesis and amyloplast development within the peripheral endosperm during the grain-filling stage. In Oryza sativa subsp. japonica (Rice), this protein is 2-oxoadipate dioxygenase/decarboxylase, chloroplastic/amyloplastic.